Consider the following 59-residue polypeptide: Cecropin-A1 (59 aa).

Positions 1 to 23 (MNFTKLFAIVLLAALVLLGQTEA) are cleaved as a signal peptide.

It belongs to the cecropin family.

It localises to the secreted. Cecropins have lytic and antibacterial activity against several Gram-positive and Gram-negative bacteria. The polypeptide is Cecropin-A1 (CECA1) (Aedes albopictus (Asian tiger mosquito)).